We begin with the raw amino-acid sequence, 604 residues long: Baculoviral IAP repeat-containing protein 3 (604 aa).

3 BIR repeats span residues 29 to 96, 169 to 235, and 255 to 322; these read ELYR…CRFV, ENAR…CPFI, and HAAR…CEYL. Zn(2+) is bound by residues Cys292, Cys295, His312, and Cys319. Residues 439-529 form the CARD domain; sequence KESNDLLLIR…VLYEHLFVQQ (91 aa). The segment at 557 to 592 adopts an RING-type zinc-finger fold; that stretch reads CKVCMDKEVSIVFIPCGHLVVCKDCAPSLRKCPICR.

The protein belongs to the IAP family. Interacts with PRSS25; interaction inhibits apoptotic suppressor activity. The BIR motifs region interacts with TNF receptor associated factors 1 and 2 (TRAF1 and TRAF2) to form a heteromeric complex, which is then recruited to the tumor necrosis factor receptor 2 (TNFR2). Interaction with TRAF2 is required for ubiquitination of IKBKE, degradation of NFKBIA and activation of NF-kappa-B. Interacts with RIP1, RIP2, RIP3, RIP4 and USP19. Auto-ubiquitinated and degraded by the proteasome in apoptotic cells. As to expression, highly expressed in fetal lung, and kidney. In the adult, expression is mainly seen in lymphoid tissues, including spleen, thymus and peripheral blood lymphocytes.

The protein resides in the cytoplasm. The protein localises to the nucleus. It carries out the reaction S-ubiquitinyl-[E2 ubiquitin-conjugating enzyme]-L-cysteine + [acceptor protein]-L-lysine = [E2 ubiquitin-conjugating enzyme]-L-cysteine + N(6)-ubiquitinyl-[acceptor protein]-L-lysine.. USP19 regulates the stability of BIRC3/c-IAP2 by preventing its ubiquitination. Its function is as follows. Multi-functional protein which regulates not only caspases and apoptosis, but also modulates inflammatory signaling and immunity, mitogenic kinase signaling and cell proliferation, as well as cell invasion and metastasis. Acts as an E3 ubiquitin-protein ligase regulating NF-kappa-B signaling and regulates both canonical and non-canonical NF-kappa-B signaling by acting in opposite directions: acts as a positive regulator of the canonical pathway and suppresses constitutive activation of non-canonical NF-kappa-B signaling. The target proteins for its E3 ubiquitin-protein ligase activity include: RIPK1, RIPK2, RIPK3, RIPK4, CASP3, CASP7, CASP8, IKBKE, TRAF1, and BCL10. Acts as an important regulator of innate immune signaling via regulation of Toll-like receptors (TLRs), Nodlike receptors (NLRs) and RIG-I like receptors (RLRs), collectively referred to as pattern recognition receptors (PRRs). Protects cells from spontaneous formation of the ripoptosome, a large multi-protein complex that has the capability to kill cancer cells in a caspase-dependent and caspase-independent manner. Suppresses ripoptosome formation by ubiquitinating RIPK1 and CASP8. The polypeptide is Baculoviral IAP repeat-containing protein 3 (BIRC3) (Homo sapiens (Human)).